Here is a 289-residue protein sequence, read N- to C-terminus: Serine/threonine-protein phosphatase Pgam5, mitochondrial (289 aa).

Belongs to the phosphoglycerate mutase family. BPG-dependent PGAM subfamily. Interacts with Pk92B/ASK1.

The protein resides in the mitochondrion outer membrane. The enzyme catalyses O-phospho-L-seryl-[protein] + H2O = L-seryl-[protein] + phosphate. It catalyses the reaction O-phospho-L-threonyl-[protein] + H2O = L-threonyl-[protein] + phosphate. Functionally, displays phosphatase activity for serine/threonine residues, and dephosphorylates and activates Pk92B kinase. Has apparently no phosphoglycerate mutase activity. The chain is Serine/threonine-protein phosphatase Pgam5, mitochondrial from Drosophila grimshawi (Hawaiian fruit fly).